A 183-amino-acid chain; its full sequence is ATP synthase subunit b, chloroplastic (183 aa).

A helical membrane pass occupies residues 27 to 49 (LATNLINLTVVVGVLIFFGKGVL).

The protein belongs to the ATPase B chain family. As to quaternary structure, F-type ATPases have 2 components, F(1) - the catalytic core - and F(0) - the membrane proton channel. F(1) has five subunits: alpha(3), beta(3), gamma(1), delta(1), epsilon(1). F(0) has four main subunits: a(1), b(1), b'(1) and c(10-14). The alpha and beta chains form an alternating ring which encloses part of the gamma chain. F(1) is attached to F(0) by a central stalk formed by the gamma and epsilon chains, while a peripheral stalk is formed by the delta, b and b' chains.

The protein resides in the plastid. Its subcellular location is the chloroplast thylakoid membrane. Functionally, f(1)F(0) ATP synthase produces ATP from ADP in the presence of a proton or sodium gradient. F-type ATPases consist of two structural domains, F(1) containing the extramembraneous catalytic core and F(0) containing the membrane proton channel, linked together by a central stalk and a peripheral stalk. During catalysis, ATP synthesis in the catalytic domain of F(1) is coupled via a rotary mechanism of the central stalk subunits to proton translocation. Component of the F(0) channel, it forms part of the peripheral stalk, linking F(1) to F(0). The protein is ATP synthase subunit b, chloroplastic of Brachypodium distachyon (Purple false brome).